Consider the following 179-residue polypeptide: Proteasome chaperone 3 (179 aa).

The protein belongs to the PSMG3 family. In terms of assembly, component of the 20S proteasome chaperone. Forms a heterodimer with POC4 that binds to proteasome precursors. Interacts with POP2.

Its function is as follows. Involved in 20S proteasome assembly, facilitating the alpha-ring formation. In Saccharomyces cerevisiae (strain ATCC 204508 / S288c) (Baker's yeast), this protein is Proteasome chaperone 3 (IRC25).